Reading from the N-terminus, the 296-residue chain is uncharacterized protein (296 aa).

Positions 129–170 (VKELKDLIRTVADEHMKMKREHEAAMKELTLLINNQKQQQQQ) form a coiled coil. Positions 165–187 (KQQQQQPVPMPRNSTATRPKNLA) are disordered.

This is an uncharacterized protein from Ostreid herpesvirus 1 (isolate France) (OsHV-1).